A 298-amino-acid polypeptide reads, in one-letter code: Cyclin-dependent kinase 2 (298 aa).

Position 1 is an N-acetylmethionine (Met1). One can recognise a Protein kinase domain in the interval 4 to 286 (FQKVEKIGEG…AKAALAHPFF (283 aa)). At Lys6 the chain carries N6-acetyllysine. Position 10 to 18 (10 to 18 (IGEGTYGVV)) interacts with ATP. At Thr14 the chain carries Phosphothreonine. A Phosphotyrosine; by WEE1 modification is found at Tyr15. Tyr19 bears the Phosphotyrosine mark. ATP is bound by residues Lys33, 81–83 (ELL), and Asp86. Asp127 functions as the Proton acceptor in the catalytic mechanism. ATP contacts are provided by residues 129 to 132 (KPQN) and Asp145. Mg(2+) is bound by residues Asn132 and Asp145. A Phosphothreonine; by CAK and CCRK modification is found at Thr160.

It belongs to the protein kinase superfamily. CMGC Ser/Thr protein kinase family. CDC2/CDKX subfamily. As to quaternary structure, found in a complex with CABLES1, CCNA1 and CCNE1. Interacts with CABLES1. Interacts with UHRF2. Part of a complex consisting of UHRF2, CDK2 and CCNE1. Interacts with the Speedy/Ringo proteins SPDYA and SPDYC. Interaction with SPDYA promotes kinase activation via a conformation change that alleviates obstruction of the substrate-binding cleft by the T-loop. Found in a complex with both SPDYA and CDKN1B/KIP1. Binds to RB1 and CDK7. Binding to CDKN1A (p21) leads to CDK2/cyclin E inactivation at the G1-S phase DNA damage checkpoint, thereby arresting cells at the G1-S transition during DNA repair. Associated with PTPN6 and beta-catenin/CTNNB1. Interacts with CACUL1. May interact with CEP63. Interacts with ANKRD17. Interacts with CEBPA (when phosphorylated). Forms a ternary complex with CCNA2 and CDKN1B; CDKN1B inhibits the kinase activity of CDK2 through conformational rearrangements. Interacts with cyclins A, B1, B3, D, or E. Interacts with CDK2AP2. Mg(2+) is required as a cofactor. In terms of processing, phosphorylated at Thr-160 by CDK7 in a CAK complex. Phosphorylation at Thr-160 promotes kinase activity, whereas phosphorylation at Tyr-15 by WEE1 reduces slightly kinase activity. Phosphorylated on Thr-14 and Tyr-15 during S and G2 phases before being dephosphorylated by CDC25A. Nitrosylated after treatment with nitric oxide (DETA-NO).

The protein localises to the cytoplasm. It localises to the cytoskeleton. Its subcellular location is the microtubule organizing center. The protein resides in the centrosome. It is found in the nucleus. The protein localises to the cajal body. It localises to the endosome. The enzyme catalyses L-seryl-[protein] + ATP = O-phospho-L-seryl-[protein] + ADP + H(+). It catalyses the reaction L-threonyl-[protein] + ATP = O-phospho-L-threonyl-[protein] + ADP + H(+). Its activity is regulated as follows. Phosphorylation at Thr-14 or Tyr-15 inactivates the enzyme, while phosphorylation at Thr-160 activates it. Stimulated by MYC. Inactivated by CDKN1A (p21). Functionally, serine/threonine-protein kinase involved in the control of the cell cycle; essential for meiosis, but dispensable for mitosis. Phosphorylates CABLES1, CTNNB1, CDK2AP2, ERCC6, NBN, USP37, p53/TP53, NPM1, CDK7, RB1, BRCA2, MYC, NPAT, EZH2. Triggers duplication of centrosomes and DNA. Acts at the G1-S transition to promote the E2F transcriptional program and the initiation of DNA synthesis, and modulates G2 progression; controls the timing of entry into mitosis/meiosis by controlling the subsequent activation of cyclin B/CDK1 by phosphorylation, and coordinates the activation of cyclin B/CDK1 at the centrosome and in the nucleus. Crucial role in orchestrating a fine balance between cellular proliferation, cell death, and DNA repair in embryonic stem cells (ESCs). Activity of CDK2 is maximal during S phase and G2; activated by interaction with cyclin E during the early stages of DNA synthesis to permit G1-S transition, and subsequently activated by cyclin A2 (cyclin A1 in germ cells) during the late stages of DNA replication to drive the transition from S phase to mitosis, the G2 phase. EZH2 phosphorylation promotes H3K27me3 maintenance and epigenetic gene silencing. Cyclin E/CDK2 prevents oxidative stress-mediated Ras-induced senescence by phosphorylating MYC. Involved in G1-S phase DNA damage checkpoint that prevents cells with damaged DNA from initiating mitosis; regulates homologous recombination-dependent repair by phosphorylating BRCA2, this phosphorylation is low in S phase when recombination is active, but increases as cells progress towards mitosis. In response to DNA damage, double-strand break repair by homologous recombination a reduction of CDK2-mediated BRCA2 phosphorylation. Involved in regulation of telomere repair by mediating phosphorylation of NBN. Phosphorylation of RB1 disturbs its interaction with E2F1. NPM1 phosphorylation by cyclin E/CDK2 promotes its dissociation from unduplicated centrosomes, thus initiating centrosome duplication. Cyclin E/CDK2-mediated phosphorylation of NPAT at G1-S transition and until prophase stimulates the NPAT-mediated activation of histone gene transcription during S phase. Required for vitamin D-mediated growth inhibition by being itself inactivated. Involved in the nitric oxide- (NO) mediated signaling in a nitrosylation/activation-dependent manner. USP37 is activated by phosphorylation and thus triggers G1-S transition. CTNNB1 phosphorylation regulates insulin internalization. Phosphorylates FOXP3 and negatively regulates its transcriptional activity and protein stability. Phosphorylates ERCC6 which is essential for its chromatin remodeling activity at DNA double-strand breaks. Acts as a regulator of the phosphatidylinositol 3-kinase/protein kinase B signal transduction by mediating phosphorylation of the C-terminus of protein kinase B (PKB/AKT1 and PKB/AKT2), promoting its activation. The sequence is that of Cyclin-dependent kinase 2 (CDK2) from Mesocricetus auratus (Golden hamster).